Here is a 93-residue protein sequence, read N- to C-terminus: Probable chloroethene reductive dehalogenase membrane anchor protein (93 aa).

A run of 3 helical transmembrane segments spans residues 3-23, 35-55, and 64-84; these read AIYFFLTIALAVGLTMLFTWF, WVLGILGLLLALFAIQHTYAS, and SAWIVGVIVLLLAVVPLLFAA.

It belongs to the PceB family.

The protein resides in the cell membrane. Functionally, may act as a membrane anchor for the chloroethene reductive dehalogenase VcrA. The polypeptide is Probable chloroethene reductive dehalogenase membrane anchor protein (Dehalococcoides mccartyi (strain VS)).